The primary structure comprises 100 residues: Small ribosomal subunit protein uS14c (100 aa).

This sequence belongs to the universal ribosomal protein uS14 family. As to quaternary structure, part of the 30S ribosomal subunit.

The protein localises to the plastid. It localises to the chloroplast. Functionally, binds 16S rRNA, required for the assembly of 30S particles. The protein is Small ribosomal subunit protein uS14c of Arabis hirsuta (Hairy rock-cress).